The primary structure comprises 145 residues: uncharacterized protein (145 aa).

Residues 1-59 (MSTGTPHYAADRSKSRKSNNNRSIPFRTPTTQKVVKTSIRLGPVNPPTPTRNTQGGHGF) are disordered.

This is an uncharacterized protein from Caenorhabditis elegans.